The following is a 331-amino-acid chain: C-type lectin domain family 4 member K (331 aa).

The Cytoplasmic portion of the chain corresponds to 1–41 (MPEAEMKEEAPEAHFTVDKQNISLWPREPPPKQDLSPVLRK). The helical; Signal-anchor for type II membrane protein transmembrane segment at 42–62 (PLCICVAFTCLALVLVTSIVL) threads the bilayer. Residues 63-331 (QAVFYPRLMG…CKRPYVQTTE (269 aa)) are Extracellular-facing. Residues Asn-90 and Asn-116 are each glycosylated (N-linked (GlcNAc...) asparagine). Positions 106–197 (DDAEVQMQIV…LKQQSDILEM (92 aa)) form a coiled coil. The region spanning 205-323 (FSGNFYYFSR…CDNTFLFICK (119 aa)) is the C-type lectin domain. Cystine bridges form between Cys-226/Cys-322 and Cys-298/Cys-314.

Homotrimer. In terms of tissue distribution, expressed by Langerhans cells. Expressed in dendritic cells and by scattered cells in lymph nodes and spleen. Also detected in some non-lymphoid tissues such as lung, liver and heart.

It localises to the membrane. Calcium-dependent lectin displaying mannose-binding specificity. Induces the formation of Birbeck granules (BGs); is a potent regulator of membrane superimposition and zippering. Binds to sulfated as well as mannosylated glycans, keratan sulfate (KS) and beta-glucans. Facilitates uptake of antigens and is involved in the routing and/or processing of antigen for presentation to T cells. This chain is C-type lectin domain family 4 member K (Cd207), found in Mus musculus (Mouse).